We begin with the raw amino-acid sequence, 452 residues long: Chaperone SurA (452 aa).

Residues 1-28 (MKKTLRFAAVVSSLAASAALLVAAPAAA) form the signal peptide. PpiC domains are found at residues 186–288 (QQDL…RLVD) and 302–400 (IVQT…QVLN).

It is found in the periplasm. The enzyme catalyses [protein]-peptidylproline (omega=180) = [protein]-peptidylproline (omega=0). In terms of biological role, chaperone involved in the correct folding and assembly of outer membrane proteins. Recognizes specific patterns of aromatic residues and the orientation of their side chains, which are found more frequently in integral outer membrane proteins. May act in both early periplasmic and late outer membrane-associated steps of protein maturation. In Burkholderia orbicola (strain AU 1054), this protein is Chaperone SurA.